Here is a 164-residue protein sequence, read N- to C-terminus: Photosystem II extrinsic protein V (164 aa).

An N-terminal signal peptide occupies residues Met1–Ala27. The heme c site is built by Cys64, Cys67, His68, and Met131.

Belongs to the cytochrome c family. PsbV subfamily. PSII is composed of 1 copy each of membrane proteins PsbA, PsbB, PsbC, PsbD, PsbE, PsbF, PsbH, PsbI, PsbJ, PsbK, PsbL, PsbM, PsbT, PsbY, PsbZ, Psb30/Ycf12, at least 3 peripheral proteins of the oxygen-evolving complex and a large number of cofactors. It forms dimeric complexes. The extrinsic subunits in red algae are PsbO (OEC33), PsbQ', cytochrome c-550 and PsbU. Heme c is required as a cofactor.

The protein resides in the plastid. It localises to the chloroplast thylakoid membrane. Functionally, one of the extrinsic, lumenal subunits of photosystem II (PSII). PSII is a light-driven water plastoquinone oxidoreductase, using light energy to abstract electrons from H(2)O, generating a proton gradient subsequently used for ATP formation. The extrinsic proteins stabilize the structure of photosystem II oxygen-evolving complex (OEC), the ion environment of oxygen evolution and protect the OEC against heat-induced inactivation. The polypeptide is Photosystem II extrinsic protein V (Gracilaria tenuistipitata var. liui (Red alga)).